The primary structure comprises 342 residues: Tetraacyldisaccharide 4'-kinase (342 aa).

68 to 75 (TVGGTGKT) provides a ligand contact to ATP.

Belongs to the LpxK family.

It catalyses the reaction a lipid A disaccharide + ATP = a lipid IVA + ADP + H(+). The protein operates within glycolipid biosynthesis; lipid IV(A) biosynthesis; lipid IV(A) from (3R)-3-hydroxytetradecanoyl-[acyl-carrier-protein] and UDP-N-acetyl-alpha-D-glucosamine: step 6/6. In terms of biological role, transfers the gamma-phosphate of ATP to the 4'-position of a tetraacyldisaccharide 1-phosphate intermediate (termed DS-1-P) to form tetraacyldisaccharide 1,4'-bis-phosphate (lipid IVA). In Burkholderia ambifaria (strain MC40-6), this protein is Tetraacyldisaccharide 4'-kinase.